A 319-amino-acid chain; its full sequence is tRNA-cytidine(32) 2-sulfurtransferase (319 aa).

Positions 43 to 48 (SGGKDS) match the PP-loop motif motif. Positions 118, 121, and 209 each coordinate [4Fe-4S] cluster.

The protein belongs to the TtcA family. As to quaternary structure, homodimer. It depends on Mg(2+) as a cofactor. The cofactor is [4Fe-4S] cluster.

Its subcellular location is the cytoplasm. The catalysed reaction is cytidine(32) in tRNA + S-sulfanyl-L-cysteinyl-[cysteine desulfurase] + AH2 + ATP = 2-thiocytidine(32) in tRNA + L-cysteinyl-[cysteine desulfurase] + A + AMP + diphosphate + H(+). It functions in the pathway tRNA modification. Its function is as follows. Catalyzes the ATP-dependent 2-thiolation of cytidine in position 32 of tRNA, to form 2-thiocytidine (s(2)C32). The sulfur atoms are provided by the cysteine/cysteine desulfurase (IscS) system. The chain is tRNA-cytidine(32) 2-sulfurtransferase from Neisseria meningitidis serogroup C (strain 053442).